A 189-amino-acid polypeptide reads, in one-letter code: Bilin-binding protein (189 aa).

A signal peptide spans 1-15; it reads MQYLIVLALVAAASA. 2 disulfide bridges follow: Cys23-Cys130 and Cys57-Cys185.

The protein belongs to the calycin superfamily. Lipocalin family. In terms of assembly, homotetramer. As to expression, hemolymph.

Its subcellular location is the secreted. Its function is as follows. This protein binds the blue pigments bilins. This Pieris brassicae (White butterfly) protein is Bilin-binding protein.